The sequence spans 176 residues: Putative L,D-transpeptidase YqjB (176 aa).

The first 25 residues, 1-25, serve as a signal peptide directing secretion; that stretch reads MRFFLCSIFMMISPIWPLGENPLPG. The L,D-TPase catalytic domain maps to 27-151; the sequence is PYVIVNKRTN…IPVGTRVLIT (125 aa). His-111 serves as the catalytic Proton donor/acceptor. The active-site Nucleophile is the Cys-127.

It belongs to the YkuD family.

It participates in cell wall biogenesis; peptidoglycan biosynthesis. The protein is Putative L,D-transpeptidase YqjB (yqjB) of Bacillus subtilis (strain 168).